Reading from the N-terminus, the 515-residue chain is ATP synthase subunit alpha (515 aa).

171-178 is an ATP binding site; that stretch reads GDRQTGKT.

This sequence belongs to the ATPase alpha/beta chains family. In terms of assembly, F-type ATPases have 2 components, CF(1) - the catalytic core - and CF(0) - the membrane proton channel. CF(1) has five subunits: alpha(3), beta(3), gamma(1), delta(1), epsilon(1). CF(0) has three main subunits: a(1), b(2) and c(9-12). The alpha and beta chains form an alternating ring which encloses part of the gamma chain. CF(1) is attached to CF(0) by a central stalk formed by the gamma and epsilon chains, while a peripheral stalk is formed by the delta and b chains.

Its subcellular location is the cell inner membrane. The enzyme catalyses ATP + H2O + 4 H(+)(in) = ADP + phosphate + 5 H(+)(out). Its function is as follows. Produces ATP from ADP in the presence of a proton gradient across the membrane. The alpha chain is a regulatory subunit. This is ATP synthase subunit alpha from Xylella fastidiosa (strain M12).